Consider the following 232-residue polypeptide: GTP cyclohydrolase 1 (232 aa).

A disordered region spans residues 1–24 (MSDNLKSYQDNHIENEDEEIYERS). Residues C121, H124, and C192 each coordinate Zn(2+).

Belongs to the GTP cyclohydrolase I family. Toroid-shaped homodecamer, composed of two pentamers of five dimers.

The catalysed reaction is GTP + H2O = 7,8-dihydroneopterin 3'-triphosphate + formate + H(+). It functions in the pathway cofactor biosynthesis; 7,8-dihydroneopterin triphosphate biosynthesis; 7,8-dihydroneopterin triphosphate from GTP: step 1/1. Functionally, first enzyme in the biosynthesis of tetrahydrobiopterin (BH4). Catalyzes the conversion of GTP into dihydroneopterin triphosphate (7,8-dihydroneopterin 3'-triphosphate), which is subsequently catalyzed by 6-pyruvoyltetrahydropterin synthase (ptsA) and sepiapterin reductase (sprA). This chain is GTP cyclohydrolase 1 (gchA), found in Dictyostelium discoideum (Social amoeba).